Here is a 232-residue protein sequence, read N- to C-terminus: Ethylene-responsive transcription factor ERF025 (232 aa).

A compositionally biased stretch (polar residues) spans 1 to 29; that stretch reads MSNNNNSPTTVNQETTTSREVSITLPTDQ. The disordered stretch occupies residues 1–63; that stretch reads MSNNNNSPTT…TATGLSGKHS (63 aa). Positions 30–50 are enriched in low complexity; sequence SPQTSPGSSSSPSPRPSGGSP. A DNA-binding region (AP2/ERF) is located at residues 64–120; the sequence is IFRGIRLRNGKWVSEIREPRKTTRIWLGTYPVPEMAAAAYDVAALALKGPDAVLNFP. The disordered stretch occupies residues 213–232; it reads PTMEDDSPENHEGDNLWSYK.

Belongs to the AP2/ERF transcription factor family. ERF subfamily.

The protein localises to the nucleus. Its function is as follows. Probably acts as a transcriptional activator. Binds to the GCC-box pathogenesis-related promoter element. May be involved in the regulation of gene expression by stress factors and by components of stress signal transduction pathways. This is Ethylene-responsive transcription factor ERF025 (ERF025) from Arabidopsis thaliana (Mouse-ear cress).